Consider the following 37-residue polypeptide: Cytochrome b6-f complex subunit 7 (37 aa).

The chain crosses the membrane as a helical span at residues 11–29 (AILSIVLVLVGLAWGFLLL).

This sequence belongs to the PetM family. As to quaternary structure, the 4 large subunits of the cytochrome b6-f complex are cytochrome b6, subunit IV (17 kDa polypeptide, PetD), cytochrome f and the Rieske protein, while the 4 small subunits are PetG, PetL, PetM and PetN. The complex functions as a dimer.

The protein localises to the cellular thylakoid membrane. Its function is as follows. Component of the cytochrome b6-f complex, which mediates electron transfer between photosystem II (PSII) and photosystem I (PSI), cyclic electron flow around PSI, and state transitions. In Gloeothece citriformis (strain PCC 7424) (Cyanothece sp. (strain PCC 7424)), this protein is Cytochrome b6-f complex subunit 7.